The primary structure comprises 122 residues: Large ribosomal subunit protein uL14 (122 aa).

It belongs to the universal ribosomal protein uL14 family. As to quaternary structure, part of the 50S ribosomal subunit. Forms a cluster with proteins L3 and L19. In the 70S ribosome, L14 and L19 interact and together make contacts with the 16S rRNA in bridges B5 and B8.

Functionally, binds to 23S rRNA. Forms part of two intersubunit bridges in the 70S ribosome. This is Large ribosomal subunit protein uL14 from Burkholderia vietnamiensis (strain G4 / LMG 22486) (Burkholderia cepacia (strain R1808)).